We begin with the raw amino-acid sequence, 425 residues long: Protein upregulated in glial subsets pugs-5 (425 aa).

The span at Asn-355–Gly-373 shows a compositional bias: basic and acidic residues. Positions Asn-355–Met-407 are disordered.

This is Protein upregulated in glial subsets pugs-5 from Caenorhabditis elegans.